Reading from the N-terminus, the 173-residue chain is Disulfide bond formation protein B (173 aa).

At 1 to 14 (MIEFLRRIAAHRLA) the chain is on the cytoplasmic side. Residues 15–31 (WSLLAASALFLELSALF) traverse the membrane as a helical segment. Residues 32-49 (FQHVLGLHPCVMCVYERI) lie on the Periplasmic side of the membrane. Cysteine 41 and cysteine 44 are joined by a disulfide. The chain crosses the membrane as a helical span at residues 50-65 (ATLGVLTAGLLGMVAP). The Cytoplasmic portion of the chain corresponds to 66-72 (QKWYVRW). A helical membrane pass occupies residues 73 to 90 (SALLLWGSSAFWGLKLAL). Over 91-145 (KHVDYQVNPSPFNVCEGFVDFPSWAPLDQWIPWMFYPDGDCSEVTWQFLSFSMPQ) the chain is Periplasmic. Cysteine 105 and cysteine 131 form a disulfide bridge. A helical transmembrane segment spans residues 146-164 (WLVAIFAVYLLVFVVVAIG). Topologically, residues 165–173 (NLVKGRCCS) are cytoplasmic.

Belongs to the DsbB family.

It is found in the cell inner membrane. Its function is as follows. Required for disulfide bond formation in some periplasmic proteins. Acts by oxidizing the DsbA protein. In Aeromonas hydrophila subsp. hydrophila (strain ATCC 7966 / DSM 30187 / BCRC 13018 / CCUG 14551 / JCM 1027 / KCTC 2358 / NCIMB 9240 / NCTC 8049), this protein is Disulfide bond formation protein B.